The chain runs to 246 residues: Sec-independent protein translocase protein TatB (246 aa).

The helical transmembrane segment at 1–21 (MFDIGWSELLVIAVVLIVVVG) threads the bilayer. Disordered stretches follow at residues 94–122 (SDLQ…APLV), 179–204 (SRSK…PKPT), and 225–246 (VADA…KDEA). Composition is skewed to polar residues over residues 97-112 (QKAT…TAAP) and 187-197 (PETTVATNASE).

This sequence belongs to the TatB family. In terms of assembly, the Tat system comprises two distinct complexes: a TatABC complex, containing multiple copies of TatA, TatB and TatC subunits, and a separate TatA complex, containing only TatA subunits. Substrates initially bind to the TatABC complex, which probably triggers association of the separate TatA complex to form the active translocon.

The protein resides in the cell inner membrane. In terms of biological role, part of the twin-arginine translocation (Tat) system that transports large folded proteins containing a characteristic twin-arginine motif in their signal peptide across membranes. Together with TatC, TatB is part of a receptor directly interacting with Tat signal peptides. TatB may form an oligomeric binding site that transiently accommodates folded Tat precursor proteins before their translocation. This chain is Sec-independent protein translocase protein TatB, found in Agrobacterium fabrum (strain C58 / ATCC 33970) (Agrobacterium tumefaciens (strain C58)).